We begin with the raw amino-acid sequence, 122 residues long: Large ribosomal subunit protein uL14 (122 aa).

It belongs to the universal ribosomal protein uL14 family. In terms of assembly, part of the 50S ribosomal subunit. Forms a cluster with proteins L3 and L19. In the 70S ribosome, L14 and L19 interact and together make contacts with the 16S rRNA in bridges B5 and B8.

Functionally, binds to 23S rRNA. Forms part of two intersubunit bridges in the 70S ribosome. The chain is Large ribosomal subunit protein uL14 from Flavobacterium psychrophilum (strain ATCC 49511 / DSM 21280 / CIP 103535 / JIP02/86).